The following is a 519-amino-acid chain: Mannosyl-oligosaccharide alpha-1,2-mannosidase (519 aa).

The signal sequence occupies residues 1 to 22; sequence MKGSPVLAVCAAALTLIPSVVA. Asn-187 carries N-linked (GlcNAc...) asparagine glycosylation. A disulfide bridge links Cys-337 with Cys-366. The active-site Proton donor is Glu-380. Residue Asn-443 is glycosylated (N-linked (GlcNAc...) asparagine). Thr-507 is a Ca(2+) binding site.

Belongs to the glycosyl hydrolase 47 family. In terms of assembly, monomer. It depends on Ca(2+) as a cofactor. Requires Mg(2+) as cofactor.

Its subcellular location is the secreted. It catalyses the reaction N(4)-(alpha-D-Man-(1-&gt;2)-alpha-D-Man-(1-&gt;2)-alpha-D-Man-(1-&gt;3)-[alpha-D-Man-(1-&gt;2)-alpha-D-Man-(1-&gt;3)-[alpha-D-Man-(1-&gt;2)-alpha-D-Man-(1-&gt;6)]-alpha-D-Man-(1-&gt;6)]-beta-D-Man-(1-&gt;4)-beta-D-GlcNAc-(1-&gt;4)-beta-D-GlcNAc)-L-asparaginyl-[protein] (N-glucan mannose isomer 9A1,2,3B1,2,3) + 4 H2O = N(4)-(alpha-D-Man-(1-&gt;3)-[alpha-D-Man-(1-&gt;3)-[alpha-D-Man-(1-&gt;6)]-alpha-D-Man-(1-&gt;6)]-beta-D-Man-(1-&gt;4)-beta-D-GlcNAc-(1-&gt;4)-beta-D-GlcNAc)-L-asparaginyl-[protein] (N-glucan mannose isomer 5A1,2) + 4 beta-D-mannose. It carries out the reaction N(4)-(alpha-D-Man-(1-&gt;2)-alpha-D-Man-(1-&gt;2)-alpha-D-Man-(1-&gt;3)-[alpha-D-Man-(1-&gt;3)-[alpha-D-Man-(1-&gt;2)-alpha-D-Man-(1-&gt;6)]-alpha-D-Man-(1-&gt;6)]-beta-D-Man-(1-&gt;4)-beta-D-GlcNAc-(1-&gt;4)-beta-D-GlcNAc)-L-asparaginyl-[protein] (N-glucan mannose isomer 8A1,2,3B1,3) + 3 H2O = N(4)-(alpha-D-Man-(1-&gt;3)-[alpha-D-Man-(1-&gt;3)-[alpha-D-Man-(1-&gt;6)]-alpha-D-Man-(1-&gt;6)]-beta-D-Man-(1-&gt;4)-beta-D-GlcNAc-(1-&gt;4)-beta-D-GlcNAc)-L-asparaginyl-[protein] (N-glucan mannose isomer 5A1,2) + 3 beta-D-mannose. It participates in protein modification; protein glycosylation. Its function is as follows. Alpha-mannosidase involved in the maturation of Asn-linked oligosaccharides. Progressively trims alpha-1,2-linked mannose residues from Man(9)GlcNAc(2) to produce Man(5)GlcNAc(2). This Coccidioides posadasii (strain RMSCC 757 / Silveira) (Valley fever fungus) protein is Mannosyl-oligosaccharide alpha-1,2-mannosidase.